We begin with the raw amino-acid sequence, 310 residues long: Dicarboxylate carrier UCP2 (310 aa).

Residues 1-10 are Mitochondrial intermembrane-facing; the sequence is MVGFRAGDVP. Residues 11–32 traverse the membrane as a helical segment; it reads PTATVKFIGAGTAACIADLFTF. 3 Solcar repeats span residues 11 to 107, 115 to 204, and 213 to 298; these read PTAT…VKQF, AGIG…IKDA, and DDLP…LKRA. At 33 to 78 the chain is on the mitochondrial matrix side; sequence PLDTAKVRLQIQGENKASTNMGRGPVKYRGVFGTISTMVRVEGPRS. A helical membrane pass occupies residues 79-101; the sequence is LYSGLVAGLQRQMSFASVRIGLY. The Mitochondrial intermembrane portion of the chain corresponds to 102-120; sequence DSVKQFYTKGSDHAGIGSR. A helical membrane pass occupies residues 121–137; sequence LMAGCTTGAMAVAVAQP. Residues 138–181 are Mitochondrial matrix-facing; that stretch reads TDVLKVRFQAQVSAGASKRYHSTMDAYRTIAKEEGFRGLWKGTG. The chain crosses the membrane as a helical span at residues 182–198; it reads PNITRNAIVNCTELVTY. Residues 199–215 are Mitochondrial intermembrane-facing; the sequence is DLIKDALLKSSLMTDDL. Residues 216–235 traverse the membrane as a helical segment; that stretch reads PCHFTSAFGAGFCTTIIASP. Over 236-269 the chain is Mitochondrial matrix; sequence VDVVKTRYMNSAQGQYSSALNCAVAMLTKKGPKA. Residues 270-292 form a helical membrane-spanning segment; it reads FFKGFMPSFLRLGSWNVVMFVTY. The segment at 277 to 299 is purine nucleotide binding; the sequence is SFLRLGSWNVVMFVTYEQLKRAM. Residues 293–310 are Mitochondrial intermembrane-facing; that stretch reads EQLKRAMMAARQNWHTPL.

Belongs to the mitochondrial carrier (TC 2.A.29) family. In terms of assembly, homotetramer. Adopts an asymmetrical dimer of dimers functional form.

It localises to the mitochondrion inner membrane. It catalyses the reaction L-aspartate(out) + phosphate(in) + H(+)(in) = L-aspartate(in) + phosphate(out) + H(+)(out). It carries out the reaction oxaloacetate(out) + phosphate(in) + H(+)(in) = oxaloacetate(in) + phosphate(out) + H(+)(out). The enzyme catalyses (S)-malate(out) + phosphate(in) + H(+)(in) = (S)-malate(in) + phosphate(out) + H(+)(out). The catalysed reaction is malonate(out) + phosphate(in) + H(+)(in) = malonate(in) + phosphate(out) + H(+)(out). It catalyses the reaction sulfate(out) + phosphate(in) + H(+)(in) = sulfate(in) + phosphate(out) + H(+)(out). It carries out the reaction (S)-malate(out) = (S)-malate(in). The enzyme catalyses L-aspartate(out) = L-aspartate(in). The catalysed reaction is phosphate(in) = phosphate(out). It catalyses the reaction chloride(in) = chloride(out). It carries out the reaction H(+)(in) = H(+)(out). The enzyme catalyses a long-chain fatty acid(out) = a long-chain fatty acid(in). Its function is as follows. UCP are mitochondrial transporter proteins that create proton leaks across the inner mitochondrial membrane, thus uncoupling oxidative phosphorylation from ATP synthesis. As a result, energy is dissipated in the form of heat. In terms of biological role, antiporter that exports dicarboxylate intermediates of the Krebs cycle in exchange for phosphate plus a proton across the inner membrane of mitochondria, a process driven by mitochondrial motive force with an overall impact on glycolysis, glutaminolysis and glutathione-dependent redox balance. Continuous export of oxaloacetate and related four-carbon dicarboxylates from mitochondrial matrix into the cytosol negatively regulates the oxidation of acetyl-CoA substrates via the Krebs cycle, lowering the ATP/ADP ratio and reactive oxygen species (ROS) production. May mediate inducible proton entry into the mitochondrial matrix affecting ATP turnover as a protection mechanism against oxidative stress. The proton currents are most likely associated with fatty acid flipping across the inner membrane of mitochondria in a metabolic process regulated by free fatty acids and purine nucleotides. The protein is Dicarboxylate carrier UCP2 (ucp2) of Danio rerio (Zebrafish).